We begin with the raw amino-acid sequence, 163 residues long: Photosystem II extrinsic protein V (163 aa).

The N-terminal stretch at 1 to 26 (MFRRLIGVVVATALLTFQLIVGSATA) is a signal peptide. Residues Cys-63, Cys-66, His-67, and His-118 each contribute to the heme c site.

It belongs to the cytochrome c family. PsbV subfamily. As to quaternary structure, PSII is composed of 1 copy each of membrane proteins PsbA, PsbB, PsbC, PsbD, PsbE, PsbF, PsbH, PsbI, PsbJ, PsbK, PsbL, PsbM, PsbT, PsbX, PsbY, PsbZ, Psb30/Ycf12, peripheral proteins PsbO, CyanoQ (PsbQ), PsbU, PsbV and a large number of cofactors. It forms dimeric complexes. Heme c is required as a cofactor.

The protein localises to the cellular thylakoid membrane. In terms of biological role, one of the extrinsic, lumenal subunits of photosystem II (PSII). PSII is a light-driven water plastoquinone oxidoreductase, using light energy to abstract electrons from H(2)O, generating a proton gradient subsequently used for ATP formation. The extrinsic proteins stabilize the structure of photosystem II oxygen-evolving complex (OEC), the ion environment of oxygen evolution and protect the OEC against heat-induced inactivation. Low-potential cytochrome c that plays a role in the OEC of PSII. In Nostoc sp. (strain PCC 7120 / SAG 25.82 / UTEX 2576), this protein is Photosystem II extrinsic protein V.